The sequence spans 118 residues: Large ribosomal subunit protein bL20 (118 aa).

Belongs to the bacterial ribosomal protein bL20 family.

Functionally, binds directly to 23S ribosomal RNA and is necessary for the in vitro assembly process of the 50S ribosomal subunit. It is not involved in the protein synthesizing functions of that subunit. In Phenylobacterium zucineum (strain HLK1), this protein is Large ribosomal subunit protein bL20.